We begin with the raw amino-acid sequence, 656 residues long: Protein EMBRYO SAC DEVELOPMENT ARREST 30 (656 aa).

Residues tryptophan 9–threonine 29 form a helical; Signal-anchor for type II membrane protein membrane-spanning segment. An N-linked (GlcNAc...) asparagine glycan is attached at asparagine 119. A disordered region spans residues leucine 381 to aspartate 426. Basic and acidic residues predominate over residues arginine 401–asparagine 412. Over residues arginine 417–aspartate 426 the composition is skewed to pro residues. N-linked (GlcNAc...) asparagine glycosylation is found at asparagine 444, asparagine 522, asparagine 534, and asparagine 544. Residues serine 631–aspartate 656 form a disordered region. Acidic residues predominate over residues aspartate 647–aspartate 656.

It belongs to the glycosyltransferase GT106 family.

It is found in the membrane. It participates in glycan metabolism. This chain is Protein EMBRYO SAC DEVELOPMENT ARREST 30, found in Arabidopsis thaliana (Mouse-ear cress).